A 570-amino-acid chain; its full sequence is Sulfite reductase [NADPH] hemoprotein beta-component (570 aa).

[4Fe-4S] cluster contacts are provided by cysteine 434, cysteine 440, cysteine 479, and cysteine 483. A siroheme-binding site is contributed by cysteine 483.

The protein belongs to the nitrite and sulfite reductase 4Fe-4S domain family. As to quaternary structure, alpha(8)-beta(8). The alpha component is a flavoprotein, the beta component is a hemoprotein. Siroheme serves as cofactor. [4Fe-4S] cluster is required as a cofactor.

It carries out the reaction hydrogen sulfide + 3 NADP(+) + 3 H2O = sulfite + 3 NADPH + 4 H(+). Its pathway is sulfur metabolism; hydrogen sulfide biosynthesis; hydrogen sulfide from sulfite (NADPH route): step 1/1. Its function is as follows. Component of the sulfite reductase complex that catalyzes the 6-electron reduction of sulfite to sulfide. This is one of several activities required for the biosynthesis of L-cysteine from sulfate. The chain is Sulfite reductase [NADPH] hemoprotein beta-component from Escherichia coli (strain B / BL21-DE3).